A 247-amino-acid polypeptide reads, in one-letter code: MEMDKRIYLELRNRTPSDVKELVLDNCRSIEGKIEGLTDEFEELEFLSTINVGLTSISNLPKLNKLKKLELSENRISGDLEVLAEKCPNLKHLNLSGNKIKDLSTIEPLKKLENLKSLDLFNCEVTNLNAYRENVFKLLPQVMYLDGYDRDNKEAPDSDVEGYVEDDDEEDEDEEEYDEYAQLVEDEEEEDEEEEGEEEDVSGEEEEDEEGYNDGEVDDEEDEEDAAEEEGSQKRKREPDDEGQEDD.

Position 15 is a phosphothreonine (Thr-15). A Phosphoserine modification is found at Ser-17. 4 LRR repeats span residues 18–41 (DVKE…TDEF), 43–64 (ELEF…PKLN), 65–87 (KLKK…AEKC), and 89–110 (NLKH…EPLK). Residues 123-161 (CEVTNLNAYRENVFKLLPQVMYLDGYDRDNKEAPDSDVE) enclose the LRRCT domain. Residues 150 to 172 (RDNKEAPDSDVEGYVEDDDEEDE) are necessary for tumor-suppressive function. The segment at 150-247 (RDNKEAPDSD…EPDDEGQEDD (98 aa)) is disordered. Residues 157–230 (DSDVEGYVED…EDEEDAAEEE (74 aa)) show a composition bias toward acidic residues. 2 positions are modified to phosphoserine: Ser-158 and Ser-202. Residues 165 to 247 (EDDDEEDEDE…EPDDEGQEDD (83 aa)) are interaction with E4F1.

It belongs to the ANP32 family. In terms of assembly, component of the SET complex, composed of at least ANP32A, APEX1, HMGB2, NME1, SET and TREX1. Directly interacts with SET. Interacts with ATXN1/SCA1. Interacts with MAP1B. Interacts with ELAVL1. Part of the INHAT (inhibitor of histone acetyltransferases) complex. Interacts with E4F1. Phosphorylated on serine residues, at least in part by casein kinase 2/CK2. In terms of processing, some glutamate residues are glycylated by TTLL8. This modification occurs exclusively on glutamate residues and results in a glycine chain on the gamma-carboxyl group. As to expression, widely distributed in the central nervous system, with an abundant expression in the cerebellum.

It localises to the nucleus. The protein localises to the cytoplasm. The protein resides in the endoplasmic reticulum. Multifunctional protein that is involved in the regulation of many processes including tumor suppression, apoptosis, cell cycle progression or transcription. Promotes apoptosis by favouring the activation of caspase-9/CASP9 and allowing apoptosome formation. In addition, plays a role in the modulation of histone acetylation and transcription as part of the INHAT (inhibitor of histone acetyltransferases) complex. Inhibits the histone-acetyltranferase activity of EP300/CREBBP (CREB-binding protein) and EP300/CREBBP-associated factor by histone masking. Preferentially binds to unmodified histone H3 and sterically inhibiting its acetylation and phosphorylation leading to cell growth inhibition. Participates in other biochemical processes such as regulation of mRNA nuclear-to-cytoplasmic translocation and stability by its association with ELAVL1 (Hu-antigen R). Plays a role in E4F1-mediated transcriptional repression as well as inhibition of protein phosphatase 2A. This Rattus norvegicus (Rat) protein is Acidic leucine-rich nuclear phosphoprotein 32 family member A (Anp32a).